Here is a 202-residue protein sequence, read N- to C-terminus: Outer-membrane lipoprotein carrier protein (202 aa).

The signal sequence occupies residues 1 to 21; that stretch reads MKRLLVACCFLSGLISASALA.

It belongs to the LolA family. Monomer.

The protein localises to the periplasm. Participates in the translocation of lipoproteins from the inner membrane to the outer membrane. Only forms a complex with a lipoprotein if the residue after the N-terminal Cys is not an aspartate (The Asp acts as a targeting signal to indicate that the lipoprotein should stay in the inner membrane). The sequence is that of Outer-membrane lipoprotein carrier protein from Yersinia pestis bv. Antiqua (strain Antiqua).